The following is a 227-amino-acid chain: ATP-dependent dethiobiotin synthetase BioD (227 aa).

13–18 (DIGKTY) lines the ATP pocket. Residue threonine 17 coordinates Mg(2+). Lysine 38 is an active-site residue. Serine 42 is a substrate binding site. Residues aspartate 55, 116-119 (EGSG), and 179-180 (NN) contribute to the ATP site. Residues aspartate 55 and glutamate 116 each contribute to the Mg(2+) site.

Belongs to the dethiobiotin synthetase family. Homodimer. It depends on Mg(2+) as a cofactor.

The protein localises to the cytoplasm. The catalysed reaction is (7R,8S)-7,8-diammoniononanoate + CO2 + ATP = (4R,5S)-dethiobiotin + ADP + phosphate + 3 H(+). It participates in cofactor biosynthesis; biotin biosynthesis; biotin from 7,8-diaminononanoate: step 1/2. Functionally, catalyzes a mechanistically unusual reaction, the ATP-dependent insertion of CO2 between the N7 and N8 nitrogen atoms of 7,8-diaminopelargonic acid (DAPA, also called 7,8-diammoniononanoate) to form a ureido ring. This Clostridium botulinum (strain Eklund 17B / Type B) protein is ATP-dependent dethiobiotin synthetase BioD.